The primary structure comprises 262 residues: Ribosomal RNA small subunit methyltransferase G (262 aa).

Residues Gly-72, Leu-77, and Arg-142 each coordinate S-adenosyl-L-methionine. The tract at residues 212–262 (RSSQLSRAEGRKGRGDGERHDGRQVRRTARDSRRSREVDRDQPTRGQSRST) is disordered. The segment covering 219–254 (AEGRKGRGDGERHDGRQVRRTARDSRRSREVDRDQP) has biased composition (basic and acidic residues).

It belongs to the methyltransferase superfamily. RNA methyltransferase RsmG family.

The protein resides in the cytoplasm. In terms of biological role, specifically methylates the N7 position of guanine in position 518 of 16S rRNA. The chain is Ribosomal RNA small subunit methyltransferase G from Frankia alni (strain DSM 45986 / CECT 9034 / ACN14a).